We begin with the raw amino-acid sequence, 471 residues long: Putative multidrug resistance protein MdtD (471 aa).

13 consecutive transmembrane segments (helical) span residues 12–32 (LWIV…VNTA), 49–69 (MVVV…GWLA), 77–97 (IFFT…WSST), 102–124 (VLAR…LTVM), 138–158 (FVTL…GILV), 165–185 (WIFL…LMLM), 197–217 (LSGF…LDGS), 222–242 (LSPL…ALYL), 263–283 (FSLG…LPFM), 286–306 (VFLQ…MIPM), 342–362 (LLFM…VLFL), 396–416 (MIMQ…LGMF), and 431–451 (VFMY…LIFA).

Belongs to the major facilitator superfamily. TCR/Tet family.

The protein localises to the cell inner membrane. This chain is Putative multidrug resistance protein MdtD, found in Citrobacter koseri (strain ATCC BAA-895 / CDC 4225-83 / SGSC4696).